Consider the following 616-residue polypeptide: Chaperone protein HscA (616 aa).

Belongs to the heat shock protein 70 family.

Chaperone involved in the maturation of iron-sulfur cluster-containing proteins. Has a low intrinsic ATPase activity which is markedly stimulated by HscB. Involved in the maturation of IscU. The chain is Chaperone protein HscA from Enterobacter sp. (strain 638).